Reading from the N-terminus, the 410-residue chain is Peptidase T (410 aa).

Zn(2+) is bound at residue His79. The active site involves Asp81. Position 142 (Asp142) interacts with Zn(2+). Residue Glu176 is the Proton acceptor of the active site. Zn(2+) contacts are provided by Glu177, Asp199, and His381.

It belongs to the peptidase M20B family. Zn(2+) is required as a cofactor.

It is found in the cytoplasm. It catalyses the reaction Release of the N-terminal residue from a tripeptide.. In terms of biological role, cleaves the N-terminal amino acid of tripeptides. In Listeria monocytogenes serotype 4b (strain F2365), this protein is Peptidase T.